Reading from the N-terminus, the 263-residue chain is Type-2Ba cytolytic delta-endotoxin (263 aa).

Belongs to the cyt1/cyt2 endotoxin family. In terms of processing, active after proteolytic processing.

Its function is as follows. Kills the larvae of dipteran insects by making pores in the epithelial cell membrane of the insect midgut. In Bacillus thuringiensis subsp. israelensis, this protein is Type-2Ba cytolytic delta-endotoxin (cyt2Ba1).